The chain runs to 278 residues: Putative phosphoenolpyruvate synthase regulatory protein (278 aa).

158-165 serves as a coordination point for ADP; the sequence is GVSRSGKT.

Belongs to the pyruvate, phosphate/water dikinase regulatory protein family. PSRP subfamily.

The enzyme catalyses [pyruvate, water dikinase] + ADP = [pyruvate, water dikinase]-phosphate + AMP + H(+). It carries out the reaction [pyruvate, water dikinase]-phosphate + phosphate + H(+) = [pyruvate, water dikinase] + diphosphate. Its function is as follows. Bifunctional serine/threonine kinase and phosphorylase involved in the regulation of the phosphoenolpyruvate synthase (PEPS) by catalyzing its phosphorylation/dephosphorylation. This Acinetobacter baylyi (strain ATCC 33305 / BD413 / ADP1) protein is Putative phosphoenolpyruvate synthase regulatory protein.